The chain runs to 525 residues: GMP synthase [glutamine-hydrolyzing] (525 aa).

Positions proline 16 to aspartate 205 constitute a Glutamine amidotransferase type-1 domain. The Nucleophile role is filled by cysteine 93. Residues histidine 179 and glutamate 181 contribute to the active site. The GMPS ATP-PPase domain occupies tryptophan 206–arginine 399. Serine 233 to alanine 239 contributes to the ATP binding site.

Homodimer.

The enzyme catalyses XMP + L-glutamine + ATP + H2O = GMP + L-glutamate + AMP + diphosphate + 2 H(+). The protein operates within purine metabolism; GMP biosynthesis; GMP from XMP (L-Gln route): step 1/1. Catalyzes the synthesis of GMP from XMP. This is GMP synthase [glutamine-hydrolyzing] from Mycolicibacterium paratuberculosis (strain ATCC BAA-968 / K-10) (Mycobacterium paratuberculosis).